We begin with the raw amino-acid sequence, 82 residues long: Large ribosomal subunit protein bL31 (82 aa).

Zn(2+) contacts are provided by cysteine 16, cysteine 18, cysteine 37, and cysteine 40.

The protein belongs to the bacterial ribosomal protein bL31 family. Type A subfamily. In terms of assembly, part of the 50S ribosomal subunit. The cofactor is Zn(2+).

Functionally, binds the 23S rRNA. This chain is Large ribosomal subunit protein bL31, found in Blochmanniella pennsylvanica (strain BPEN).